The following is a 502-amino-acid chain: Mannitol 2-dehydrogenase (502 aa).

NAD(+) is bound at residue 35–46 (IVHVGVGGFHRA).

This sequence belongs to the mannitol dehydrogenase family. In terms of assembly, monomer.

It catalyses the reaction D-mannitol + NAD(+) = D-fructose + NADH + H(+). In terms of biological role, catalyzes the NAD(H)-dependent interconversion of D-fructose and D-mannitol in the mannitol metabolic pathway. In Pyricularia oryzae (strain 70-15 / ATCC MYA-4617 / FGSC 8958) (Rice blast fungus), this protein is Mannitol 2-dehydrogenase.